Consider the following 168-residue polypeptide: MKEASDREEAPKMVEKNYSTGFRKAHGEKDQSVTKPISLDGRTGEVIVRKSTGKTKIRKGQTEEEYTQQLQHYFEVEQGPVRTKVGWMDEVDPLVEIREGKYDISNKHQRQVLSGFCHRLFYQCKYKECLDLSTYFLGLFEPFNVKNKMKRELEELEYMIERCRGHVL.

The segment covering 1–15 (MKEASDREEAPKMVE) has biased composition (basic and acidic residues). A disordered region spans residues 1–36 (MKEASDREEAPKMVEKNYSTGFRKAHGEKDQSVTKP).

It localises to the cytoplasm. This is an uncharacterized protein from Saccharomyces cerevisiae (strain ATCC 204508 / S288c) (Baker's yeast).